The chain runs to 149 residues: MADWDKVNSVWSAMEANITAVGQNILLRLFEQYPESQSYFPKLKNKSLGELKDTADIKAQADTVLKALGNIVKKKGNHSQPVKALAATHITTHKIPPHYFTKITTIAVGVLSEMYPSEMNAQAQEAFSGAFKSICSDIEKEYKAANFQG.

Position 2 is an N-acetylalanine (Ala2). The region spanning 2–143 is the Globin domain; sequence ADWDKVNSVW…ICSDIEKEYK (142 aa). His89 provides a ligand contact to heme b.

The protein belongs to the globin family. In terms of assembly, monomeric.

It is found in the cytoplasm. Its subcellular location is the sarcoplasm. It catalyses the reaction Fe(III)-heme b-[protein] + nitric oxide + H2O = Fe(II)-heme b-[protein] + nitrite + 2 H(+). It carries out the reaction H2O2 + AH2 = A + 2 H2O. Its function is as follows. Monomeric heme protein which primary function is to store oxygen and facilitate its diffusion within muscle tissues. Reversibly binds oxygen through a pentacoordinated heme iron and enables its timely and efficient release as needed during periods of heightened demand. Depending on the oxidative conditions of tissues and cells, and in addition to its ability to bind oxygen, it also has a nitrite reductase activity whereby it regulates the production of bioactive nitric oxide. Under stress conditions, like hypoxia and anoxia, it also protects cells against reactive oxygen species thanks to its pseudoperoxidase activity. The polypeptide is Myoglobin (mb) (Galeorhinus galeus (Tope shark)).